A 65-amino-acid chain; its full sequence is Large ribosomal subunit protein bL35 (65 aa).

The protein belongs to the bacterial ribosomal protein bL35 family.

The protein is Large ribosomal subunit protein bL35 of Prochlorococcus marinus subsp. pastoris (strain CCMP1986 / NIES-2087 / MED4).